The sequence spans 460 residues: Adenosylhomocysteinase (460 aa).

The substrate site is built by Thr83, Asp158, and Glu184. An NAD(+)-binding site is contributed by 185–187 (TTT). Residues Lys214 and Asp218 each coordinate substrate. NAD(+) contacts are provided by residues Asn219, 248–253 (GYGDVG), Glu271, 327–329 (IGH), and Asn373.

This sequence belongs to the adenosylhomocysteinase family. The cofactor is NAD(+).

It is found in the cytoplasm. It catalyses the reaction S-adenosyl-L-homocysteine + H2O = L-homocysteine + adenosine. Its pathway is amino-acid biosynthesis; L-homocysteine biosynthesis; L-homocysteine from S-adenosyl-L-homocysteine: step 1/1. May play a key role in the regulation of the intracellular concentration of adenosylhomocysteine. The chain is Adenosylhomocysteinase from Bdellovibrio bacteriovorus (strain ATCC 15356 / DSM 50701 / NCIMB 9529 / HD100).